Reading from the N-terminus, the 580-residue chain is Membrane protein insertase YidC (580 aa).

6 helical membrane-spanning segments follow: residues 5-25 (SVTG…FMSP), 259-279 (KYFV…LDGS), 362-382 (GLII…LSLA), 427-447 (LGGC…FYVF), 477-497 (IPMY…TVFV), and 513-533 (IMLY…PSGL).

The protein belongs to the OXA1/ALB3/YidC family. Type 1 subfamily. In terms of assembly, interacts with the Sec translocase complex via SecD. Specifically interacts with transmembrane segments of nascent integral membrane proteins during membrane integration.

The protein localises to the cell inner membrane. Its function is as follows. Required for the insertion and/or proper folding and/or complex formation of integral membrane proteins into the membrane. Involved in integration of membrane proteins that insert both dependently and independently of the Sec translocase complex, as well as at least some lipoproteins. Aids folding of multispanning membrane proteins. In Chlorobium phaeovibrioides (strain DSM 265 / 1930) (Prosthecochloris vibrioformis (strain DSM 265)), this protein is Membrane protein insertase YidC.